The following is a 368-amino-acid chain: 3-dehydroquinate synthase (368 aa).

Residues 112 to 116, 136 to 137, Lys-149, Lys-158, and 176 to 179 contribute to the NAD(+) site; these read GVIGD, TT, and TLIT. Zn(2+) is bound by residues Glu-191, His-256, and His-273.

The protein belongs to the sugar phosphate cyclases superfamily. Dehydroquinate synthase family. Requires Co(2+) as cofactor. Zn(2+) serves as cofactor. The cofactor is NAD(+).

It localises to the cytoplasm. The catalysed reaction is 7-phospho-2-dehydro-3-deoxy-D-arabino-heptonate = 3-dehydroquinate + phosphate. Its pathway is metabolic intermediate biosynthesis; chorismate biosynthesis; chorismate from D-erythrose 4-phosphate and phosphoenolpyruvate: step 2/7. Catalyzes the conversion of 3-deoxy-D-arabino-heptulosonate 7-phosphate (DAHP) to dehydroquinate (DHQ). The sequence is that of 3-dehydroquinate synthase from Prochlorococcus marinus (strain NATL2A).